Reading from the N-terminus, the 483-residue chain is Regulatory protein ViaA (483 aa).

This sequence belongs to the ViaA family. In terms of assembly, homodimer. Interacts with RavA.

The protein localises to the cytoplasm. Functionally, component of the RavA-ViaA chaperone complex, which may act on the membrane to optimize the function of some of the respiratory chains. ViaA stimulates the ATPase activity of RavA. The polypeptide is Regulatory protein ViaA (Escherichia coli (strain 55989 / EAEC)).